The primary structure comprises 124 residues: UPF0102 protein Meso_4010 (124 aa).

The protein belongs to the UPF0102 family.

The polypeptide is UPF0102 protein Meso_4010 (Chelativorans sp. (strain BNC1)).